The chain runs to 149 residues: Flagellar assembly factor FliW (149 aa).

The protein belongs to the FliW family. In terms of assembly, interacts with translational regulator CsrA and flagellin(s).

It is found in the cytoplasm. Its function is as follows. Acts as an anti-CsrA protein, binds CsrA and prevents it from repressing translation of its target genes, one of which is flagellin. Binds to flagellin and participates in the assembly of the flagellum. In Thermotoga petrophila (strain ATCC BAA-488 / DSM 13995 / JCM 10881 / RKU-1), this protein is Flagellar assembly factor FliW.